A 468-amino-acid polypeptide reads, in one-letter code: Probable protein phosphatase 2C 52 (468 aa).

One can recognise a PPM-type phosphatase domain in the interval 67–372; sequence SSCIFTQQGR…DDCAVVCLFL (306 aa). Mn(2+)-binding residues include D102, G103, D317, and D363. The span at 413-429 shows a compositional bias: polar residues; that stretch reads RSSSDQENETYGNVNTE. The segment at 413 to 442 is disordered; sequence RSSSDQENETYGNVNTETDAEDEKTVGDQN.

It belongs to the PP2C family. Requires Mg(2+) as cofactor. Mn(2+) serves as cofactor.

The catalysed reaction is O-phospho-L-seryl-[protein] + H2O = L-seryl-[protein] + phosphate. It catalyses the reaction O-phospho-L-threonyl-[protein] + H2O = L-threonyl-[protein] + phosphate. This Arabidopsis thaliana (Mouse-ear cress) protein is Probable protein phosphatase 2C 52.